Consider the following 125-residue polypeptide: Glycine cleavage system H protein (125 aa).

Residues 23-105 (VSTVGITEHA…FEGGWLFKVR (83 aa)) form the Lipoyl-binding domain. Lysine 64 is modified (N6-lipoyllysine).

This sequence belongs to the GcvH family. The glycine cleavage system is composed of four proteins: P, T, L and H. (R)-lipoate is required as a cofactor.

Its function is as follows. The glycine cleavage system catalyzes the degradation of glycine. The H protein shuttles the methylamine group of glycine from the P protein to the T protein. The chain is Glycine cleavage system H protein from Streptomyces coelicolor (strain ATCC BAA-471 / A3(2) / M145).